A 299-amino-acid polypeptide reads, in one-letter code: tRNA dimethylallyltransferase (299 aa).

Residue 13–20 (GPTASGKT) coordinates ATP. Residue 15–20 (TASGKT) participates in substrate binding. Residues 38–41 (DSRQ) are interaction with substrate tRNA.

It belongs to the IPP transferase family. Monomer. Mg(2+) is required as a cofactor.

The enzyme catalyses adenosine(37) in tRNA + dimethylallyl diphosphate = N(6)-dimethylallyladenosine(37) in tRNA + diphosphate. Catalyzes the transfer of a dimethylallyl group onto the adenine at position 37 in tRNAs that read codons beginning with uridine, leading to the formation of N6-(dimethylallyl)adenosine (i(6)A). This Prochlorococcus marinus (strain SARG / CCMP1375 / SS120) protein is tRNA dimethylallyltransferase.